The chain runs to 481 residues: UDP-N-acetylmuramate--L-alanine ligase (481 aa).

Position 135-141 (135-141 (GTHGKTT)) interacts with ATP.

This sequence belongs to the MurCDEF family.

It is found in the cytoplasm. It carries out the reaction UDP-N-acetyl-alpha-D-muramate + L-alanine + ATP = UDP-N-acetyl-alpha-D-muramoyl-L-alanine + ADP + phosphate + H(+). It participates in cell wall biogenesis; peptidoglycan biosynthesis. In terms of biological role, cell wall formation. This is UDP-N-acetylmuramate--L-alanine ligase from Nostoc punctiforme (strain ATCC 29133 / PCC 73102).